Reading from the N-terminus, the 563-residue chain is Coiled-coil domain-containing protein 38 (563 aa).

Polar residues predominate over residues 1–11; it reads MSSNLLPTLNS. The disordered stretch occupies residues 1–21; that stretch reads MSSNLLPTLNSGGKVKDGSTK. A coiled-coil region spans residues 129–212; the sequence is KRNTIKKFEK…VKSEIAKTEF (84 aa). A disordered region spans residues 272 to 311; it reads ESGRTAVLSEDASQGRDSQGKPSRSLTRTPEKKKSNLAES. Residues 282–299 are compositionally biased toward polar residues; it reads DASQGRDSQGKPSRSLTR. Coiled coils occupy residues 384 to 415 and 497 to 522; these read NIEF…KSKL and RDEK…AVAQ. Residues 522-563 form a disordered region; it reads QPKKKLGRRLVFHSKPPSGNKQQLPLVNETKTKSQEEEYFFT. The segment covering 523–533 has biased composition (basic residues); sequence PKKKLGRRLVF.

As to quaternary structure, interacts with CCDC42, CFAP53, IFT88 and ODF2. Interacts with CCDC146. Interacts with TEKT3. Interacts with ubiquitinated histone H2A.

It localises to the cytoplasm. Its subcellular location is the cytoskeleton. It is found in the microtubule organizing center. The protein localises to the centrosome. The protein resides in the perinuclear region. It localises to the cell projection. Its subcellular location is the cilium. It is found in the flagellum. Functionally, essential for male fertility. Required for sperm flagellum biogenesis. Also required for acrosome biogenesis. Required for the attachment of developing acrosomes to the nucleus during spermiogenesis and may be involved in the transport of fibrous sheath components. This Homo sapiens (Human) protein is Coiled-coil domain-containing protein 38 (CCDC38).